The sequence spans 528 residues: Tyrosine--tRNA ligase, cytoplasmic (528 aa).

Met-1 carries the N-acetylmethionine modification. At Gly-2 the chain carries N-acetylglycine; in Tyrosine--tRNA ligase, cytoplasmic, N-terminally processed. Tyr-39 serves as a coordination point for L-tyrosine. Residue Tyr-39 participates in trans-resveratrol binding. The 'HIGH' region signature appears at 44 to 52; it reads TTGKPHVAY. The L-tyrosine site is built by Tyr-166, Gln-170, Asp-173, and Gln-188. Gln-170 and Asp-173 together coordinate trans-resveratrol. An N6-acetyllysine modification is found at Lys-197. At Ser-205 the chain carries Phosphoserine. Residue Lys-206 is modified to N6-acetyllysine. Residues 222-226 carry the 'KMSKS' region motif; that stretch reads KMSSS. The Nuclear localization signal signature appears at 242 to 247; that stretch reads KKKLKK. Residues 339 to 363 are disordered; the sequence is AAYPDPSKQKPPAKGPAKNSEPEEV. Residues 364–468 enclose the tRNA-binding domain; the sequence is IPSRLDIRVG…AGSAPGERVF (105 aa). The residue at position 386 (Ser-386) is a Phosphoserine. An N6-acetyllysine mark is found at Lys-474, Lys-482, and Lys-490.

Belongs to the class-I aminoacyl-tRNA synthetase family. Homodimer. Interacts (when binding to resveratrol) with PARP1; interaction stimulates the poly-ADP-ribosyltransferase activity of PARP1.

It is found in the cytoplasm. It localises to the nucleus. The enzyme catalyses tRNA(Tyr) + L-tyrosine + ATP = L-tyrosyl-tRNA(Tyr) + AMP + diphosphate + H(+). Its activity is regulated as follows. Resveratrol strongly inhibits the tyrosine--tRNA ligase activity. Functionally, tyrosine--tRNA ligase that catalyzes the attachment of tyrosine to tRNA(Tyr) in a two-step reaction: tyrosine is first activated by ATP to form Tyr-AMP and then transferred to the acceptor end of tRNA(Tyr). Also acts as a positive regulator of poly-ADP-ribosylation in the nucleus, independently of its tyrosine--tRNA ligase activity. Activity is switched upon resveratrol-binding: resveratrol strongly inhibits the tyrosine--tRNA ligase activity and promotes relocalization to the nucleus, where YARS1 specifically stimulates the poly-ADP-ribosyltransferase activity of PARP1. This is Tyrosine--tRNA ligase, cytoplasmic (Yars1) from Mus musculus (Mouse).